A 156-amino-acid polypeptide reads, in one-letter code: Transcription elongation factor GreA 1 (156 aa).

A coiled-coil region spans residues 43–74 (RSENAEYSSAKRDLGRLESRLRYLNKQLQYAQ).

The protein belongs to the GreA/GreB family.

Its function is as follows. Necessary for efficient RNA polymerase transcription elongation past template-encoded arresting sites. The arresting sites in DNA have the property of trapping a certain fraction of elongating RNA polymerases that pass through, resulting in locked ternary complexes. Cleavage of the nascent transcript by cleavage factors such as GreA or GreB allows the resumption of elongation from the new 3'terminus. GreA releases sequences of 2 to 3 nucleotides. This chain is Transcription elongation factor GreA 1, found in Lactiplantibacillus plantarum (strain ATCC BAA-793 / NCIMB 8826 / WCFS1) (Lactobacillus plantarum).